A 160-amino-acid polypeptide reads, in one-letter code: Small ribosomal subunit protein uS17m (160 aa).

This sequence belongs to the universal ribosomal protein uS17 family. In terms of assembly, component of the mitochondrial ribosome small subunit (28S) which comprises a 12S rRNA and about 30 distinct proteins.

Its subcellular location is the mitochondrion. This chain is Small ribosomal subunit protein uS17m (mrps-17), found in Caenorhabditis elegans.